Reading from the N-terminus, the 156-residue chain is Small ribosomal subunit protein uS7 (156 aa).

It belongs to the universal ribosomal protein uS7 family. In terms of assembly, part of the 30S ribosomal subunit. Contacts proteins S9 and S11.

Its function is as follows. One of the primary rRNA binding proteins, it binds directly to 16S rRNA where it nucleates assembly of the head domain of the 30S subunit. Is located at the subunit interface close to the decoding center, probably blocks exit of the E-site tRNA. This Nitrosomonas eutropha (strain DSM 101675 / C91 / Nm57) protein is Small ribosomal subunit protein uS7.